Here is a 336-residue protein sequence, read N- to C-terminus: Serpentine receptor class gamma-9 (336 aa).

7 consecutive transmembrane segments (helical) span residues 30-50 (LLQAAYMVPPAFLYARILYVI), 64-84 (FVIYSMDSIVGFILLLLDIFI), 111-131 (IYYPLLNYLHCAQPLIQIFLT), 152-172 (LSFIVAFVSLSPFLIIWNTII), 200-220 (FLFLVRSVAVIITVASTVIMF), 237-257 (LCLACVIHSICFMVPSFFEAL), and 271-291 (FLIQPFAWDVLNVGSPLIMIF).

It belongs to the nematode receptor-like protein srg family.

The protein resides in the membrane. The chain is Serpentine receptor class gamma-9 (srg-9) from Caenorhabditis elegans.